The sequence spans 238 residues: Ribonuclease PH (238 aa).

Residues Arg-86 and 124–126 (GTR) each bind phosphate.

It belongs to the RNase PH family. In terms of assembly, homohexameric ring arranged as a trimer of dimers.

It catalyses the reaction tRNA(n+1) + phosphate = tRNA(n) + a ribonucleoside 5'-diphosphate. Its function is as follows. Phosphorolytic 3'-5' exoribonuclease that plays an important role in tRNA 3'-end maturation. Removes nucleotide residues following the 3'-CCA terminus of tRNAs; can also add nucleotides to the ends of RNA molecules by using nucleoside diphosphates as substrates, but this may not be physiologically important. Probably plays a role in initiation of 16S rRNA degradation (leading to ribosome degradation) during starvation. This chain is Ribonuclease PH, found in Proteus mirabilis (strain HI4320).